A 327-amino-acid polypeptide reads, in one-letter code: MAVYTDVAADELADFLSRYDIGDLLSYKGIAEGVENSNFLLHTSRGYFILTLYEKRVARDDLPFFLSLMTHLADSGINCPQPVADREGRTLATLAGRPAAIISFLDGVWPRKPSVVHCAGVGQALAKMHLAGRDFAMKRANALSVAGWRPLFAAAEARADEVQPGLRDFLAAELSYLESGVWPSDLPQGLIHADLFPDNVFFIGDEVSGIIDFTFACNDLLAYDVAICLNAWCFEADHAFNVTKARALLSAYTRERPLDAAEQAALPLLARGAALRFLLTRLVDWLNVPEGALVKPKDPMEYVRKLRFQQNVAGIRDYGVEIAGAVA.

The protein belongs to the pseudomonas-type ThrB family.

The enzyme catalyses L-homoserine + ATP = O-phospho-L-homoserine + ADP + H(+). Its pathway is amino-acid biosynthesis; L-threonine biosynthesis; L-threonine from L-aspartate: step 4/5. This Rhodopseudomonas palustris (strain ATCC BAA-98 / CGA009) protein is Homoserine kinase.